The sequence spans 136 residues: Large ribosomal subunit protein uL22 (136 aa).

The protein belongs to the universal ribosomal protein uL22 family. In terms of assembly, part of the 50S ribosomal subunit.

Its function is as follows. This protein binds specifically to 23S rRNA; its binding is stimulated by other ribosomal proteins, e.g. L4, L17, and L20. It is important during the early stages of 50S assembly. It makes multiple contacts with different domains of the 23S rRNA in the assembled 50S subunit and ribosome. In terms of biological role, the globular domain of the protein is located near the polypeptide exit tunnel on the outside of the subunit, while an extended beta-hairpin is found that lines the wall of the exit tunnel in the center of the 70S ribosome. In Parabacteroides distasonis (strain ATCC 8503 / DSM 20701 / CIP 104284 / JCM 5825 / NCTC 11152), this protein is Large ribosomal subunit protein uL22.